We begin with the raw amino-acid sequence, 502 residues long: MTDKKYIVALDQGTTSSRAVVMDHDANIVSVSQREFEQIYPKPGWVEHDPMEIWATQSSTLVEVLAKADISSDEIAAIGITNQRETAIVWERETGKPIYNAIVWQCRRTAEICEKLKRDGMEDYIRSTTGLVVDPYFSGTKVKWILDHVEGSRERAKRGELLFGTVDTWLIWKMTQGRVHVTDYTNASRTMLFNIHKLDWDDKMLEALDIPRAMLPEVRKSSEVYGQTNIGGKGGTRIPISGIAGDQQAALFGQLCVKEGMAKNTYGTGCFMLMNTGEKAVKSENGLLTTIACGPRGEVNYALEGAVFMAGASIQWLRDEMKLISDAFDSEYFATKVKDTNGVYVVPAFTGLGAPYWDPYARGAIFGLTRGVNSNHIIRATLESIAYQTRDVLEAMQADSGIRLHALRVDGGAVANNFLMQFQSDILGTRVERPEVREVTALGAAYLAGLAVGFWQNLDELQEKAVIEREFRPGIETTERNYRYSGWKKAVKRALAWEEHEE.

An ADP-binding site is contributed by threonine 14. The ATP site is built by threonine 14, threonine 15, and serine 16. Threonine 14 lines the sn-glycerol 3-phosphate pocket. Residue arginine 18 coordinates ADP. Positions 84, 85, 136, and 246 each coordinate sn-glycerol 3-phosphate. Glycerol-binding residues include arginine 84, glutamate 85, tyrosine 136, aspartate 246, and glutamine 247. Positions 268 and 311 each coordinate ADP. Residues threonine 268, glycine 311, glutamine 315, and glycine 412 each coordinate ATP. Glycine 412 and asparagine 416 together coordinate ADP.

It belongs to the FGGY kinase family. Homotetramer and homodimer (in equilibrium). Heterodimer with EIIA-Glc. Binds 1 zinc ion per glycerol kinase EIIA-Glc dimer. The zinc ion is important for dimerization.

It carries out the reaction glycerol + ATP = sn-glycerol 3-phosphate + ADP + H(+). The protein operates within polyol metabolism; glycerol degradation via glycerol kinase pathway; sn-glycerol 3-phosphate from glycerol: step 1/1. Its activity is regulated as follows. Activity of this regulatory enzyme is affected by several metabolites. Allosterically and non-competitively inhibited by fructose 1,6-bisphosphate (FBP) and unphosphorylated phosphocarrier protein EIIA-Glc (III-Glc), an integral component of the bacterial phosphotransferase (PTS) system. Functionally, key enzyme in the regulation of glycerol uptake and metabolism. Catalyzes the phosphorylation of glycerol to yield sn-glycerol 3-phosphate. In Enterobacter sp. (strain 638), this protein is Glycerol kinase.